Here is a 194-residue protein sequence, read N- to C-terminus: Inosine triphosphate pyrophosphatase (194 aa).

Thr-11–Lys-16 lines the ITP pocket. Glu-39 serves as a coordination point for Mg(2+). Residues Lys-51, Asp-67 to Thr-68, Lys-84, Phe-143 to Asp-146, Lys-166, and His-171 to Arg-172 each bind ITP.

This sequence belongs to the HAM1 NTPase family. As to quaternary structure, homodimer. It depends on Mg(2+) as a cofactor. The cofactor is Mn(2+).

The protein resides in the cytoplasm. It carries out the reaction ITP + H2O = IMP + diphosphate + H(+). It catalyses the reaction dITP + H2O = dIMP + diphosphate + H(+). The catalysed reaction is XTP + H2O = XMP + diphosphate + H(+). Its function is as follows. Pyrophosphatase that hydrolyzes non-canonical purine nucleotides such as inosine triphosphate (ITP), deoxyinosine triphosphate (dITP) or xanthosine 5'-triphosphate (XTP) to their respective monophosphate derivatives. The enzyme does not distinguish between the deoxy- and ribose forms. Probably excludes non-canonical purines from RNA and DNA precursor pools, thus preventing their incorporation into RNA and DNA and avoiding chromosomal lesions. The protein is Inosine triphosphate pyrophosphatase (itpa) of Dictyostelium discoideum (Social amoeba).